The chain runs to 156 residues: Putative pre-16S rRNA nuclease (156 aa).

Belongs to the YqgF nuclease family.

It is found in the cytoplasm. Functionally, could be a nuclease involved in processing of the 5'-end of pre-16S rRNA. This chain is Putative pre-16S rRNA nuclease, found in Rickettsia typhi (strain ATCC VR-144 / Wilmington).